Consider the following 186-residue polypeptide: Large ribosomal subunit protein uL5 (186 aa).

The protein belongs to the universal ribosomal protein uL5 family. As to quaternary structure, part of the 50S ribosomal subunit; part of the 5S rRNA/L5/L18/L25 subcomplex. Contacts the 5S rRNA and the P site tRNA. Forms a bridge to the 30S subunit in the 70S ribosome.

Functionally, this is one of the proteins that bind and probably mediate the attachment of the 5S RNA into the large ribosomal subunit, where it forms part of the central protuberance. In the 70S ribosome it contacts protein S13 of the 30S subunit (bridge B1b), connecting the 2 subunits; this bridge is implicated in subunit movement. Contacts the P site tRNA; the 5S rRNA and some of its associated proteins might help stabilize positioning of ribosome-bound tRNAs. This Jannaschia sp. (strain CCS1) protein is Large ribosomal subunit protein uL5.